A 346-amino-acid chain; its full sequence is Endosome-associated-trafficking regulator 1 (346 aa).

Polar residues predominate over residues 46-67 (FVSSNSKRAFSKDSNQSTTQFR). Disordered regions lie at residues 46 to 77 (FVSS…DGNL), 93 to 129 (LQED…GDES), and 153 to 173 (SPPA…SDSE). Residues 170 to 317 (SDSEEGLRLL…SGAQSSIKQL (148 aa)) are a coiled coil.

It belongs to the ENTR1 family.

It is found in the cytoplasm. The protein resides in the early endosome. The protein localises to the endosome. Its subcellular location is the recycling endosome. It localises to the midbody. It is found in the cytoskeleton. The protein resides in the microtubule organizing center. The protein localises to the centrosome. Its subcellular location is the cilium basal body. Endosome-associated protein that plays a role in membrane receptor sorting, cytokinesis and ciliogenesis. This chain is Endosome-associated-trafficking regulator 1, found in Xenopus tropicalis (Western clawed frog).